We begin with the raw amino-acid sequence, 426 residues long: Adenylosuccinate synthetase 2 (426 aa).

Residues 12–18 (GDEGKGK) and 40–42 (GHT) each bind GTP. The active-site Proton acceptor is Asp13. 2 residues coordinate Mg(2+): Asp13 and Gly40. IMP is bound by residues 13-16 (DEGK), 38-41 (NAGH), Arg147, Asn223, Thr238, and Arg302. Catalysis depends on His41, which acts as the Proton donor. 298 to 304 (TNTGRRR) contacts substrate. Residues Arg304, 330–332 (KLD), and 412–414 (GVG) each bind GTP.

It belongs to the adenylosuccinate synthetase family. As to quaternary structure, homodimer. It depends on Mg(2+) as a cofactor.

The protein resides in the cytoplasm. The enzyme catalyses IMP + L-aspartate + GTP = N(6)-(1,2-dicarboxyethyl)-AMP + GDP + phosphate + 2 H(+). It participates in purine metabolism; AMP biosynthesis via de novo pathway; AMP from IMP: step 1/2. Functionally, plays an important role in the de novo pathway and in the salvage pathway of purine nucleotide biosynthesis. Catalyzes the first committed step in the biosynthesis of AMP from IMP. This Laccaria bicolor (strain S238N-H82 / ATCC MYA-4686) (Bicoloured deceiver) protein is Adenylosuccinate synthetase 2.